Reading from the N-terminus, the 215-residue chain is 3-demethoxyubiquinol 3-hydroxylase (215 aa).

Fe cation contacts are provided by glutamate 64, glutamate 94, histidine 97, glutamate 146, glutamate 178, and histidine 181.

The protein belongs to the COQ7 family. The cofactor is Fe cation.

The protein localises to the cell membrane. The enzyme catalyses a 5-methoxy-2-methyl-3-(all-trans-polyprenyl)benzene-1,4-diol + AH2 + O2 = a 3-demethylubiquinol + A + H2O. It functions in the pathway cofactor biosynthesis; ubiquinone biosynthesis. Catalyzes the hydroxylation of 2-nonaprenyl-3-methyl-6-methoxy-1,4-benzoquinol during ubiquinone biosynthesis. The protein is 3-demethoxyubiquinol 3-hydroxylase of Bordetella avium (strain 197N).